The sequence spans 639 residues: Extracellular metalloproteinase NpIII (639 aa).

Residues 1–16 (MHMLLFIGALALPVFV) form the signal peptide. A propeptide spanning residues 17–245 (CTQSCEPASL…IHGVVDYVSE (229 aa)) is cleaved from the precursor. 4 N-linked (GlcNAc...) asparagine glycosylation sites follow: N287, N320, N336, and N368. A Zn(2+)-binding site is contributed by H429. Residue E430 is part of the active site. H433 serves as a coordination point for Zn(2+). Residue N509 is glycosylated (N-linked (GlcNAc...) asparagine).

This sequence belongs to the peptidase M36 family. The cofactor is Zn(2+).

It localises to the secreted. Secreted metalloproteinase that allows assimilation of proteinaceous substrates. The sequence is that of Extracellular metalloproteinase NpIII (NpIII) from Aspergillus oryzae (strain ATCC 42149 / RIB 40) (Yellow koji mold).